We begin with the raw amino-acid sequence, 430 residues long: Tol-Pal system protein TolB (430 aa).

The first 21 residues, 1-21 (MRRFVTLLIALLCLSATAVQA), serve as a signal peptide directing secretion.

It belongs to the TolB family. The Tol-Pal system is composed of five core proteins: the inner membrane proteins TolA, TolQ and TolR, the periplasmic protein TolB and the outer membrane protein Pal. They form a network linking the inner and outer membranes and the peptidoglycan layer.

The protein resides in the periplasm. Its function is as follows. Part of the Tol-Pal system, which plays a role in outer membrane invagination during cell division and is important for maintaining outer membrane integrity. In Syntrophotalea carbinolica (strain DSM 2380 / NBRC 103641 / GraBd1) (Pelobacter carbinolicus), this protein is Tol-Pal system protein TolB.